The sequence spans 210 residues: uncharacterized protein (210 aa).

This is an uncharacterized protein from Sulfolobus islandicus filamentous virus (isolate Iceland/Hveragerdi) (SIFV).